The following is a 46-amino-acid chain: Cuticle protein 4.9 (46 aa).

Component of the cuticle of migratory locust which contains more than 100 different structural proteins. This chain is Cuticle protein 4.9, found in Locusta migratoria (Migratory locust).